A 718-amino-acid chain; its full sequence is Catalase-peroxidase (718 aa).

Residues 1 to 24 (MDQKSDNAGKCPVAHTVPKGRSNR) form a disordered region. Positions 95–217 (WHSAGTYRIT…LAAVQMGLIY (123 aa)) form a cross-link, tryptophyl-tyrosyl-methioninium (Trp-Tyr) (with M-243). The Proton acceptor role is filled by histidine 96. The tryptophyl-tyrosyl-methioninium (Tyr-Met) (with W-95) cross-link spans 217–243 (YVNPEGPNGNPDPVAAAREIRETFARM). Histidine 258 contributes to the heme b binding site.

The protein belongs to the peroxidase family. Peroxidase/catalase subfamily. Homodimer or homotetramer. The cofactor is heme b. In terms of processing, formation of the three residue Trp-Tyr-Met cross-link is important for the catalase, but not the peroxidase activity of the enzyme.

It carries out the reaction H2O2 + AH2 = A + 2 H2O. The enzyme catalyses 2 H2O2 = O2 + 2 H2O. Bifunctional enzyme with both catalase and broad-spectrum peroxidase activity. This Sinorhizobium fredii (strain NBRC 101917 / NGR234) protein is Catalase-peroxidase.